Consider the following 865-residue polypeptide: Xylosyltransferase 2 (865 aa).

At 1 to 15 (MVASARVQKLVRRYK) the chain is on the cytoplasmic side. Residues 16–36 (LAIATALAILLLQGLVVWSFS) form a helical; Signal-anchor for type II membrane protein membrane-spanning segment. Residues 37-865 (GLEEDEAGEK…GPVKADGRLR (829 aa)) are Lumenal-facing. Residues 41 to 157 (DEAGEKGRQR…EGAPQPTDNG (117 aa)) form a disordered region. Over residues 53–65 (RPLDPGEGSKDTD) the composition is skewed to basic and acidic residues. Residues 73–82 (STGRRHGRWR) show a composition bias toward basic residues. An N-linked (GlcNAc...) asparagine glycan is attached at Asn-122. The segment covering 125-137 (GAAAGEALVGAAG) has biased composition (low complexity). 4 disulfides stabilise this stretch: Cys-162–Cys-190, Cys-206–Cys-448, Cys-467–Cys-480, and Cys-469–Cys-478. UDP-alpha-D-xylose is bound by residues Val-239, Asp-267, and 296–298 (TIW). An N-linked (GlcNAc...) asparagine glycan is attached at Asn-327. 400–401 (DW) contributes to the UDP-alpha-D-xylose binding site. UDP-alpha-D-xylose contacts are provided by residues Ser-481 and 504-505 (RK). 2 disulfide bridges follow: Cys-581–Cys-833 and Cys-826–Cys-839. Residue Asn-683 is glycosylated (N-linked (GlcNAc...) asparagine). Positions 846 to 865 (SLSPDPKSELGPVKADGRLR) are disordered.

It belongs to the glycosyltransferase 14 family. XylT subfamily. Monomer. Requires Mg(2+) as cofactor. It depends on Mn(2+) as a cofactor. Contains disulfide bonds.

It localises to the golgi apparatus membrane. The protein resides in the secreted. It catalyses the reaction UDP-alpha-D-xylose + L-seryl-[protein] = 3-O-(beta-D-xylosyl)-L-seryl-[protein] + UDP + H(+). It participates in glycan metabolism; chondroitin sulfate biosynthesis. The protein operates within glycan metabolism; heparan sulfate biosynthesis. In terms of biological role, catalyzes the first step in the biosynthesis of chondroitin sulfate, heparan sulfate and dermatan sulfate proteoglycans, such as DCN. Transfers D-xylose from UDP-D-xylose to specific serine residues of the core protein. In Pan troglodytes (Chimpanzee), this protein is Xylosyltransferase 2 (XYLT2).